A 968-amino-acid polypeptide reads, in one-letter code: Alanine--tRNA ligase, cytoplasmic (968 aa).

The residue at position 1 (Met1) is an N-acetylmethionine. Residues Arg77, His95, Trp176, and Ile214–Asn216 contribute to the ATP site. L-alanine contacts are provided by Asn216 and Asp239. An ATP-binding site is contributed by Gly243. Residues Ser399 and Ser555 each carry the phosphoserine modification. His605, His609, Cys723, and His727 together coordinate Zn(2+). A Nuclear localization signal motif is present at residues Arg750–Ala763. Lys876 is subject to N6-acetyllysine. Lys943 carries the N6,N6,N6-trimethyllysine; alternate modification. Position 943 is an N6,N6-dimethyllysine; alternate (Lys943). Lys943 is modified (N6-methyllysine; alternate).

Belongs to the class-II aminoacyl-tRNA synthetase family. As to quaternary structure, monomer. Interacts with ANKRD16; the interaction is direct. Zn(2+) is required as a cofactor. ISGylated. In terms of processing, methylation at 'Lys-943' by METTL21C.

It is found in the cytoplasm. It localises to the nucleus. The catalysed reaction is tRNA(Ala) + L-alanine + ATP = L-alanyl-tRNA(Ala) + AMP + diphosphate. It catalyses the reaction (S)-lactate + ATP + H(+) = (S)-lactoyl-AMP + diphosphate. It carries out the reaction (S)-lactoyl-AMP + L-lysyl-[protein] = N(6)-[(S)-lactoyl]-L-lysyl-[protein] + AMP + 2 H(+). The protein lactyltransferase activity is inhibited by beta-alanine. Catalyzes the attachment of alanine to tRNA(Ala) in a two-step reaction: alanine is first activated by ATP to form Ala-AMP and then transferred to the acceptor end of tRNA(Ala). Also edits incorrectly charged tRNA(Ala) via its editing domain. In presence of high levels of lactate, also acts as a protein lactyltransferase that mediates lactylation of lysine residues in target proteins, such as TEAD1, TP53/p53 and YAP1. Protein lactylation takes place in a two-step reaction: lactate is first activated by ATP to form lactate-AMP and then transferred to lysine residues of target proteins. Acts as an inhibitor of TP53/p53 activity by catalyzing lactylation of TP53/p53. Acts as a positive regulator of the Hippo pathway by mediating lactylation of TEAD1 and YAP1. The sequence is that of Alanine--tRNA ligase, cytoplasmic from Mus musculus (Mouse).